The primary structure comprises 271 residues: Acetyl-coenzyme A carboxylase carboxyl transferase subunit beta (271 aa).

The CoA carboxyltransferase N-terminal domain maps to 21–271 (LWIQCPYCKQ…LGDLLALHTA (251 aa)). Residues Cys25, Cys28, Cys43, and Cys46 each contribute to the Zn(2+) site. The segment at 25-46 (CPYCKQGSYRESLGNAQVCPHC) adopts a C4-type zinc-finger fold.

Belongs to the AccD/PCCB family. As to quaternary structure, acetyl-CoA carboxylase is a heterohexamer composed of biotin carboxyl carrier protein (AccB), biotin carboxylase (AccC) and two subunits each of ACCase subunit alpha (AccA) and ACCase subunit beta (AccD). The cofactor is Zn(2+).

Its subcellular location is the cytoplasm. The enzyme catalyses N(6)-carboxybiotinyl-L-lysyl-[protein] + acetyl-CoA = N(6)-biotinyl-L-lysyl-[protein] + malonyl-CoA. Its pathway is lipid metabolism; malonyl-CoA biosynthesis; malonyl-CoA from acetyl-CoA: step 1/1. In terms of biological role, component of the acetyl coenzyme A carboxylase (ACC) complex. Biotin carboxylase (BC) catalyzes the carboxylation of biotin on its carrier protein (BCCP) and then the CO(2) group is transferred by the transcarboxylase to acetyl-CoA to form malonyl-CoA. This Lacticaseibacillus casei (strain BL23) (Lactobacillus casei) protein is Acetyl-coenzyme A carboxylase carboxyl transferase subunit beta.